The primary structure comprises 146 residues: Hemoglobin subunit beta (146 aa).

Residues 2–146 (HWSAEEKQLI…VAHALARKYH (145 aa)) form the Globin domain. The heme b site is built by His63 and His92.

It belongs to the globin family. In terms of assembly, heterotetramer of two alpha chains and two beta chains. Red blood cells.

Functionally, involved in oxygen transport from the lung to the various peripheral tissues. This is Hemoglobin subunit beta (HBB) from Anser anser anser (Western greylag goose).